Consider the following 739-residue polypeptide: Transcription regulator protein BACH1 (739 aa).

The BTB domain maps to 34–100 (CDVTVLVEGQ…AYTAKLILSK (67 aa)). S196 is subject to Phosphoserine. 2 disordered regions span residues 287-321 (MESE…PHGL) and 344-391 (KTVK…RSSV). 2 stretches are compositionally biased toward basic and acidic residues: residues 346 to 364 (VKTE…KPSE) and 376 to 391 (PKED…RSSV). The residue at position 448 (S448) is a Phosphoserine. Positions 560–623 (CIHDIRRRSK…GETKQNLTGL (64 aa)) constitute a bZIP domain. The basic motif stretch occupies residues 565-581 (RRRSKNRIAAQRCRKRK). Residues 585–592 (IQNLESEI) form a leucine-zipper region. The tract at residues 679–708 (PPTAPPPCGRGSSAASQELVQESPPTTAAA) is disordered. Low complexity predominate over residues 699-708 (QESPPTTAAA).

The protein belongs to the bZIP family. CNC subfamily. As to quaternary structure, heterodimer of BACH1 and MAFK. Post-translationally, ubiquitinated by the SCF(FBXL17) complex or by the by the SCF(FBXO22) complex, leading to its degradation by the proteasome. Under oxidative stress, reactive oxygen species covalently modify cysteine residues on the bZIP domain of BACH1 and release it from chromatin. If the BTB domain of BACH1 remains intact, its beta1-alpha6 degron is recognized by FBXO22, promoting its ubiquitination and degradation. If the structural integrity of the beta1-alpha6 degron is compromised, FBXL17 will transiently associate with the BACH1 BTB dimer and remodel it into stably bound monomer for ubiquitination and degradation. Ubiquitous.

Its subcellular location is the nucleus. Its function is as follows. Transcriptional regulator that acts as a repressor or activator, depending on the context. Binds to NF-E2 DNA binding sites. Plays important roles in coordinating transcription activation and repression by MAFK. Together with MAF, represses the transcription of genes under the control of the NFE2L2 oxidative stress pathway. In Mus musculus (Mouse), this protein is Transcription regulator protein BACH1 (Bach1).